Consider the following 91-residue polypeptide: Small ribosomal subunit protein uS15 (91 aa).

Belongs to the universal ribosomal protein uS15 family. As to quaternary structure, part of the 30S ribosomal subunit. Forms a bridge to the 50S subunit in the 70S ribosome, contacting the 23S rRNA.

One of the primary rRNA binding proteins, it binds directly to 16S rRNA where it helps nucleate assembly of the platform of the 30S subunit by binding and bridging several RNA helices of the 16S rRNA. Its function is as follows. Forms an intersubunit bridge (bridge B4) with the 23S rRNA of the 50S subunit in the ribosome. The polypeptide is Small ribosomal subunit protein uS15 (Amoebophilus asiaticus (strain 5a2)).